The following is a 398-amino-acid chain: Tryptophan synthase beta chain (398 aa).

Lys87 bears the N6-(pyridoxal phosphate)lysine mark.

It belongs to the TrpB family. As to quaternary structure, tetramer of two alpha and two beta chains. Pyridoxal 5'-phosphate is required as a cofactor.

The catalysed reaction is (1S,2R)-1-C-(indol-3-yl)glycerol 3-phosphate + L-serine = D-glyceraldehyde 3-phosphate + L-tryptophan + H2O. It participates in amino-acid biosynthesis; L-tryptophan biosynthesis; L-tryptophan from chorismate: step 5/5. Its function is as follows. The beta subunit is responsible for the synthesis of L-tryptophan from indole and L-serine. The chain is Tryptophan synthase beta chain from Blochmanniella floridana.